The following is a 4454-amino-acid chain: E3 ubiquitin-protein ligase HUWE1 (4454 aa).

The segment at 521 to 575 is disordered; the sequence is RASSSNSSTSISGPGPGPGPGPGPGPGPGPGPGPGPGLGPSLGPGPGPGPRPGVQ. Low complexity predominate over residues 523–533; the sequence is SSSNSSTSISG. Pro residues predominate over residues 535-571; that stretch reads GPGPGPGPGPGPGPGPGPGPGPGLGPSLGPGPGPGPR. Phosphoserine is present on residues S724 and S725. Disordered regions lie at residues 781–834, 1054–1077, and 1094–1114; these read QKAD…VVGT, DEKA…AGSM, and TLAP…KSKI. Acidic residues predominate over residues 801 to 811; the sequence is ASSEDEEEEEV. Polar residues predominate over residues 813–832; sequence AMQSFNSAQQNETEPNQQVV. Position 816 is a phosphoserine (S816). Residue S1160 is modified to Phosphoserine. The segment covering 1367–1378 has biased composition (basic and acidic residues); the sequence is LSKEKEGSRGEE. The segment at 1367–1396 is disordered; sequence LSKEKEGSRGEEEAGQEEGGSRREPQVNQQ. Residues 1392 to 1431 form the UBA domain; it reads QVNQQQLQQLMDMGFTREHAMEALLNTSTMEQATEYLLTH. Phosphoserine is present on residues S1444, S1446, S1458, and S1471. One can recognise a UIM domain in the interval 1446–1465; the sequence is SEEDQMMRAIAMSLGQDIPM. Positions 1472–1491 are disordered; the sequence is PEEVACRKEEEERKAREKQE. In terms of domain architecture, WWE spans 1679–1756; the sequence is RAQMTKYLQS…ETGNRRPVML (78 aa). Residues 1766-1802 are disordered; that stretch reads KNSKSSNGQELEKTLEESKETDIKRKENKGNDIPLAL. Residues 1775-1795 show a composition bias toward basic and acidic residues; the sequence is ELEKTLEESKETDIKRKENKG. Phosphoserine is present on S1983. Disordered stretches follow at residues 2095 to 2142, 2339 to 2420, and 2433 to 2556; these read APAE…SKPL, SLFG…QEMQ, and LERD…ASPL. Residues 2097-2112 show a composition bias toward low complexity; sequence AETSTTGTSQGEGAST. Residue T2112 is modified to Phosphothreonine. Over residues 2114-2134 the composition is skewed to basic and acidic residues; sequence EETREGKKDKEGDRTSEEGKQ. Over residues 2339-2368 the composition is skewed to low complexity; it reads SLFGSKSASSKSKSEQDAQGASQDSSSHQQ. A Phosphoserine modification is found at S2343. An N6-acetyllysine modification is found at K2344. Acidic residues-rich tracts occupy residues 2372 to 2383 and 2391 to 2402; these read EPGEAEVQEEDH and ADGDIMDGEAET. A phosphoserine mark is found at S2439, S2442, and S2468. Residues 2465–2475 show a composition bias toward polar residues; the sequence is SNLSQASTLQA. Acidic residues predominate over residues 2485–2549; the sequence is DPEDEEEHTQ…SEMELDEDYP (65 aa). Phosphoserine occurs at positions 2604, 2609, and 2612. T2631 is subject to Phosphothreonine. Residues S2661, S2672, and S2696 each carry the phosphoserine modification. The segment covering 2781-2793 has biased composition (basic and acidic residues); sequence IIDKGKEDKENRD. Disordered regions lie at residues 2781 to 3047 and 3113 to 3136; these read IIDK…GVDP and QQRA…MDPV. Polar residues predominate over residues 2794–2813; sequence QSAQCTVSKTNDSTEQNVSD. The segment covering 2815–2849 has biased composition (low complexity); that stretch reads TPMPDSYPTTPSSTDAPTSESKETLGTLQPSQQQP. T2828 is modified (phosphothreonine). Composition is skewed to polar residues over residues 2895–2912, 2924–2941, and 2954–2967; these read AETT…TSLS, AVSS…SLAS, and AGSS…SSTP. Phosphoserine is present on residues S2903, S2910, S2912, S2938, S2964, and S2965. At T2966 the chain carries Phosphothreonine. Positions 2990–3009 are enriched in low complexity; it reads PPEDSSPPASSESSSTRDSA. The residue at position 2995 (S2995) is a Phosphoserine. Phosphoserine occurs at positions 3193, 3194, 3199, 3204, and 3212. Omega-N-methylarginine is present on R3226. Disordered regions lie at residues 3320–3343, 3431–3458, 3482–3501, 3548–3590, and 3615–3642; these read PKLS…SHEN, QRTK…SQSS, GKNS…ETSL, SEVQ…TTPV, and TPTT…EGGS. The segment covering 3432–3446 has biased composition (basic and acidic residues); that stretch reads RTKETNCESDRERGS. Positions 3447-3458 are enriched in low complexity; sequence KQACSPCSSQSS. Composition is skewed to low complexity over residues 3552-3579 and 3615-3628; these read TNSS…ATAP and TPTT…TSTT. 6 positions are modified to phosphoserine: S3633, S3740, S3830, S3835, S3837, and S3838. A disordered region spans residues 3815–3836; the sequence is TRRANKKAKQTGRLGSSGLGSA. Over residues 3826-3836 the composition is skewed to low complexity; sequence GRLGSSGLGSA. 2 disordered regions span residues 3859 to 3927 and 3974 to 4028; these read EGQR…LPLL and RESK…SSSL. Over residues 3871 to 3880 the composition is skewed to polar residues; it reads TSESSNQSET. S3887, S3895, and S3907 each carry phosphoserine. Residues 3894 to 3905 are compositionally biased toward polar residues; that stretch reads PSPSAQDTQSIV. Residue T3910 is modified to Phosphothreonine. 2 stretches are compositionally biased toward basic and acidic residues: residues 3913–3922 and 3974–3995; these read GEKEKEERPP and RESK…KDEP. Residues S3986 and S3999 each carry the phosphoserine modification. The span at 3996 to 4005 shows a compositional bias: pro residues; it reads PPLSPAPLTP. Phosphothreonine occurs at positions 4004 and 4007. A compositionally biased stretch (polar residues) spans 4018 to 4028; sequence EPSSMHISSSL. An HECT domain is found at 4118–4454; that stretch reads SPEEMKNRLY…QECSEGFGLA (337 aa). Y4351 carries the phosphotyrosine modification. C4421 (glycyl thioester intermediate) is an active-site residue.

This sequence belongs to the UPL family. TOM1/PTR1 subfamily. In terms of assembly, interacts with isoform p14ARF of CDKN2A which strongly inhibits HUWE1 ubiquitin ligase activity. Interacts with MYCN, POLB and CDC6. Interacts with isoform 2 of PA2G4. Interacts with NR1D1. Interacts with AMBRA1. Interacts with HAPSTR1. Interacts with HAPSTR2. In hepatocytes, interacts with PAQR3; the interaction promotes PPARA poylubiquitination and STUB1-mediated degradation. Post-translationally, phosphorylated on tyrosine, phosphorylation is probably required for its ability to inhibit TP53 transactivation. In terms of tissue distribution, widely expressed.

The protein localises to the cytoplasm. It is found in the nucleus. Its subcellular location is the mitochondrion. The catalysed reaction is S-ubiquitinyl-[E2 ubiquitin-conjugating enzyme]-L-cysteine + [acceptor protein]-L-lysine = [E2 ubiquitin-conjugating enzyme]-L-cysteine + N(6)-ubiquitinyl-[acceptor protein]-L-lysine.. Its pathway is protein modification; protein ubiquitination. Its function is as follows. E3 ubiquitin-protein ligase which mediates ubiquitination and subsequent proteasomal degradation of target proteins. Regulates apoptosis by catalyzing the polyubiquitination and degradation of MCL1. Mediates monoubiquitination of DNA polymerase beta (POLB) at 'Lys-41', 'Lys-61' and 'Lys-81', thereby playing a role in base-excision repair. Also ubiquitinates the p53/TP53 tumor suppressor and core histones including H1, H2A, H2B, H3 and H4. Ubiquitinates MFN2 to negatively regulate mitochondrial fusion in response to decreased stearoylation of TFRC. Ubiquitination of MFN2 also takes place following induction of mitophagy; AMBRA1 acts as a cofactor for HUWE1-mediated ubiquitination. Regulates neural differentiation and proliferation by catalyzing the polyubiquitination and degradation of MYCN. May regulate abundance of CDC6 after DNA damage by polyubiquitinating and targeting CDC6 to degradation. Mediates polyubiquitination of PA2G4. Acts in concert with MYCBP2 to regulate the circadian clock gene expression by promoting the lithium-induced ubiquination and degradation of NR1D1. Binds to an upstream initiator-like sequence in the preprodynorphin gene. Mediates HAPSTR1 degradation, but is also a required cofactor in the pathway by which HAPSTR1 governs stress signaling. Acts as a regulator of the JNK and NF-kappa-B signaling pathways by mediating assembly of heterotypic 'Lys-63'-/'Lys-48'-linked branched ubiquitin chains that are then recognized by TAB2: HUWE1 mediates branching of 'Lys-48'-linked chains of substrates initially modified with 'Lys-63'-linked conjugates by TRAF6. 'Lys-63'-/'Lys-48'-linked branched ubiquitin chains protect 'Lys-63'-linkages from CYLD deubiquitination. Ubiquitinates PPARA in hepatocytes. In Rattus norvegicus (Rat), this protein is E3 ubiquitin-protein ligase HUWE1 (Huwe1).